The primary structure comprises 226 residues: MLLHIPALFEKDEVRRIREALEQADWADGKITAGYQSAKAKHNLQLPEGHPLAKEIGAAMLERLWKNPLFMSAALPHKVFPPLLNCYTAGGSFDFHIDNAVRQPKGSIERVRTDLSATLFFSEPEDYDGGELEIQDTFGTQRVKLPAGDMVLYPGTSLHKVNAVTRGARYASFFWTQSLVREDSQRALLFEMDGAIQQLTHDMPDHPSLIRLTGTYHNLLRRWVEV.

Residues 78-178 enclose the Fe2OG dioxygenase domain; the sequence is KVFPPLLNCY…RYASFFWTQS (101 aa). 3 residues coordinate Fe cation: His-96, Asp-98, and His-159. Arg-169 is a binding site for 2-oxoglutarate.

It depends on Fe(2+) as a cofactor. L-ascorbate serves as cofactor.

This chain is PKHD-type hydroxylase Pfl01_0799, found in Pseudomonas fluorescens (strain Pf0-1).